The chain runs to 102 residues: MVLTKAAISENLFEKLQLTKKESKEFVEFFFEEVRKSLEKGEAVKLSGFGNFQIKKKKARPGRNPRTGEIFLITARRVVTFKAGQKLKNKINNYLIKKNNNF.

The protein belongs to the bacterial histone-like protein family. In terms of assembly, heterodimer of an alpha and a beta chain.

Functionally, this protein is one of the two subunits of integration host factor, a specific DNA-binding protein that functions in genetic recombination as well as in transcriptional and translational control. The protein is Integration host factor subunit alpha of Buchnera aphidicola subsp. Acyrthosiphon pisum (strain 5A).